A 315-amino-acid chain; its full sequence is Putative olfactory receptor 2I1 (315 aa).

Topologically, residues 1-24 (MKANYSAEERFLLLGFSDWPSLQP) are extracellular. Residues 25–48 (VLFALVLLCYLLTLTGNSALVLLA) form a helical membrane-spanning segment. Residues 49-56 (VRDPRLHT) lie on the Cytoplasmic side of the membrane. The helical transmembrane segment at 57 to 78 (PMYYFLCHLALVDAGFTTSVVP) threads the bilayer. Residues 79–99 (PLLANLRGPALWLPRSHCTAQ) lie on the Extracellular side of the membrane. Residues cysteine 96 and cysteine 188 are joined by a disulfide bond. The chain crosses the membrane as a helical span at residues 100 to 119 (LCASLALGSAECVLLAVMAL). Over 120–138 (DRAAAVCRPLRYAGLVSPR) the chain is Cytoplasmic. Residues 139-157 (LCRTLASASWLSGLTNSVA) form a helical membrane-spanning segment. Residues 158–195 (QTALLAERPLCAPRLLDHFICELPALLKLACGGDGDTT) are Extracellular-facing. The chain crosses the membrane as a helical span at residues 196-219 (ENQMFAARVVILLLPFAVILASYG). The Cytoplasmic segment spans residues 220 to 236 (AVARAVCCMRFSGGRRR). A helical transmembrane segment spans residues 237 to 259 (AVGTCGSHLTAVCLFYGSAIYTY). Residues 260–272 (LQPAQRYNQARGK) are Extracellular-facing. Residues 273-292 (FVSLFYTVVTPALNPLIYTL) traverse the membrane as a helical segment. Residues 293 to 315 (RNKKVKGAARRLLRSLGRGQAGQ) lie on the Cytoplasmic side of the membrane.

Belongs to the G-protein coupled receptor 1 family.

It localises to the cell membrane. Odorant receptor. The sequence is that of Putative olfactory receptor 2I1 from Homo sapiens (Human).